The primary structure comprises 357 residues: Phenylalanine--tRNA ligase alpha subunit (357 aa).

Mg(2+) is bound at residue Glu-257.

It belongs to the class-II aminoacyl-tRNA synthetase family. Phe-tRNA synthetase alpha subunit type 1 subfamily. As to quaternary structure, tetramer of two alpha and two beta subunits. Requires Mg(2+) as cofactor.

The protein resides in the cytoplasm. It catalyses the reaction tRNA(Phe) + L-phenylalanine + ATP = L-phenylalanyl-tRNA(Phe) + AMP + diphosphate + H(+). This chain is Phenylalanine--tRNA ligase alpha subunit, found in Ruegeria pomeroyi (strain ATCC 700808 / DSM 15171 / DSS-3) (Silicibacter pomeroyi).